A 459-amino-acid chain; its full sequence is 4,4'-diaponeurosporen-aldehyde dehydrogenase (459 aa).

NAD(+) contacts are provided by residues 114-115 and 188-189; these read FN and GS. Glu210 acts as the Proton acceptor in catalysis. Residue Met211 participates in NAD(+) binding. Residue Cys244 is the Nucleophile of the active site. Glu336 contributes to the NAD(+) binding site.

It belongs to the aldehyde dehydrogenase family.

It carries out the reaction 4,4'-diaponeurosporenal + NAD(+) + H2O = 4,4'-diaponeurosporenoate + NADH + 2 H(+). It functions in the pathway carotenoid biosynthesis; staphyloxanthin biosynthesis; staphyloxanthin from farnesyl diphosphate. In terms of biological role, involved in the biosynthesis of the yellow-orange carotenoid staphyloxanthin, which plays a role in the virulence via its protective function against oxidative stress. Catalyzes the oxidation of 4,4'-diaponeurosporen-4-al to yield 4,4'-diaponeurosporenoic acid. The protein is 4,4'-diaponeurosporen-aldehyde dehydrogenase of Staphylococcus aureus (strain NCTC 8325 / PS 47).